We begin with the raw amino-acid sequence, 1596 residues long: MIYRAILKRLRLEQLARVPAVSAASPFVMMAVGVFLMLMAGGVTISTTSQAFVTCGTVGLFLLLKGRKGRGVTCFLMMLSLLVSLRYMVWRLTTTLELHSPLQAALSLLLVAAELYALLTLCLSYFQMSWPLDRKPLPLPADTTDWPVVDVYVPSYNEELSLVRSTVLGALAIDWPADKLNVYILDDGRRKSFHAFAMEAGAGYIIRDQNNHAKAGNLNHALRVTEGEYVVIFDCDHIPTRGFLKKTIGWMMADPKLALLQTPHHFYSPDPFQRNLATGQNVPPEGNMFYGLVQDGNDFWDATFFCGSCAAIRRSAVLGIGGFATETVTEDAHTALKMQREGWHTAYLRQPLAAGLSTERLMLHIGQRVRWARGMLQIMRLDNPLLGSGLRWQQRLCYLSAMSHFLFAIPRLVFLASPLAFLFLGQNIIAASPFAILVYAFPHVFHSIGTLSRVEGRWRYSFWSEIYETTLALFLVRVTIMTLLNPRKGEFNVTDKGGLLQSEYFDLNAVYPNVILAVILALALVRGIGGMMWEYHDRLALQSFALNTLWVAVSLIIVLASIAVGRETRQIRHKPRVRATLPITLIDEHGQHYHAHTSDISLGGIAARLSTEHALPTQTRVTMLYHNEKDGIDVRIPAVILFSKPGQLHLQWSVDDLDVERQIVEFMFGRNDAWSNWGDFQPDRPVRSFLMVLRSIGGLFRRGQRLFRWQAPQEAPLAESEHVEEEKLEKKSLVLKPVRRSARHGATASLIVLLGLPAAIAPSLAQAPSRATPVATEQGATPVEPPPVNAPPPPSLPQPPGTLPTPPQIAPASAGELLPAATAVSLPTGPATQQMRERLSERTGVSPASPFGDTNTGALPADPSAPPIDPADAARVADGEITRTSTFRDLGLATGPLTLRGFSPLQGLDVIVPANRVVTRARITLSGALSPSLLPEASAVSVTLNEQYVGTIRVDPEHPRFGPITFDIDPLYFTGDNKLNFHFAGEYRRDCNDLYNEVLWARISDFSTVTLTTTRIAPDRKLSYLPAPFYDPNLRTPLRVPVVMPNPDAHGMLKASALVASWFGKLADFRKVSFPVSTTIPASGNAIAIGENLPIDARGTRPTGPTLSEVENPNDRLGTILVLTGRNAQEVEVAARVLAFSSDTLGAVGTKVVNDVTLQPRHPYDAPAFVPTDRPVRFGELVAASDLQGGGFAPPVMALPFHLPPDLYSWRNRPYPIDLWVRTPGGPVVDLETSRLDVHLNNNYLDSFTLKPPSLWAAWSERLVNQHAGAVEHAAALPPWLLFGQNQLKFSFDARPIDRGVCRRTPDDIHMSVDSDSWLDFRRGYHFARLPNLSYFAEAAFPFSRMADLSETTVVVPHHIDAGTAGTFMDLMGFFGATTWYPASGVQVADINDLSEHPPQGDILILATAGDAPKFEELLTRAPYELTDGHIRVGQHMGLQGIWYLFQDHDHAGLQDGVQANLNAPIAGAGVLLGAQSPYRSDRSVVALMGDTPSRMHDLVMGLRSKEDVPRIQGDLVLRNGDRLTSYRTAPTFTMGSLPWWMWLDWYLGTRPLTLYVLGLVGAGLVAAAAVRLLRRRAQHRLEEAARVKDTTDASH.

The interval 1–749 (MIYRAILKRL…RSARHGATAS (749 aa)) is catalytic. 2 helical membrane passes run 25–45 (SPFV…GVTI) and 106–126 (LSLL…LSYF). Residues 145 to 238 (DWPVVDVYVP…YVVIFDCDHI (94 aa)) form a catalytic subdomain A region. The active site involves Asp-187. Residues Asp-234 and Asp-236 each contribute to the substrate site. A catalytic subdomain B region spans residues 315–375 (SAVLGIGGFA…GQRVRWARGM (61 aa)). Asp-331 is a catalytic residue. Transmembrane regions (helical) follow at residues 396-416 (LCYL…VFLA), 421-441 (FLFL…VYAF), 505-525 (FDLN…LALV), and 544-564 (FALN…SIAV). The PilZ domain occupies 570 to 669 (QIRHKPRVRA…ERQIVEFMFG (100 aa)). The tract at residues 750-1596 (LIVLLGLPAA…RVKDTTDASH (847 aa)) is cyclic di-GMP binding domain. 2 disordered regions span residues 769-812 (SRAT…IAPA) and 828-868 (TGPA…APPI). The span at 783 to 809 (VEPPPVNAPPPPSLPQPPGTLPTPPQI) shows a compositional bias: pro residues. The chain crosses the membrane as a helical span at residues 1553–1573 (LTLYVLGLVGAGLVAAAAVRL).

The protein in the N-terminal section; belongs to the glycosyltransferase 2 family. It in the C-terminal section; belongs to the AcsB/BcsB family.

The protein localises to the cell inner membrane. It catalyses the reaction [(1-&gt;4)-beta-D-glucosyl](n) + UDP-alpha-D-glucose = [(1-&gt;4)-beta-D-glucosyl](n+1) + UDP + H(+). This chain is Cellulose synthase 2 (acsAII), found in Novacetimonas hansenii (Komagataeibacter hansenii).